Reading from the N-terminus, the 228-residue chain is 2,3-bisphosphoglycerate-dependent phosphoglycerate mutase (228 aa).

Substrate is bound by residues 8–15 (RHGQSVWN), 21–22 (TG), arginine 60, 87–90 (ERHY), lysine 98, 114–115 (RR), and 183–184 (GN). The active-site Tele-phosphohistidine intermediate is the histidine 9. The Proton donor/acceptor role is filled by glutamate 87.

Belongs to the phosphoglycerate mutase family. BPG-dependent PGAM subfamily.

It catalyses the reaction (2R)-2-phosphoglycerate = (2R)-3-phosphoglycerate. Its pathway is carbohydrate degradation; glycolysis; pyruvate from D-glyceraldehyde 3-phosphate: step 3/5. Catalyzes the interconversion of 2-phosphoglycerate and 3-phosphoglycerate. This is 2,3-bisphosphoglycerate-dependent phosphoglycerate mutase from Staphylococcus carnosus (strain TM300).